Consider the following 123-residue polypeptide: Small ribosomal subunit protein uS13c (123 aa).

Positions 89 to 123 (RGKRHRNNLPVRGQRTRTNARSRRGSKKTVTGKKK) are disordered. Positions 102 to 123 (QRTRTNARSRRGSKKTVTGKKK) are enriched in basic residues.

This sequence belongs to the universal ribosomal protein uS13 family. As to quaternary structure, part of the 30S ribosomal subunit.

It is found in the plastid. The protein localises to the chloroplast. Functionally, located at the top of the head of the 30S subunit, it contacts several helices of the 16S rRNA. The protein is Small ribosomal subunit protein uS13c of Phaeodactylum tricornutum (strain CCAP 1055/1).